The sequence spans 158 residues: 6,7-dimethyl-8-ribityllumazine synthase (158 aa).

5-amino-6-(D-ribitylamino)uracil contacts are provided by residues phenylalanine 22, 57–59, and 81–83; these read AFE and AVI. 86–87 provides a ligand contact to (2S)-2-hydroxy-3-oxobutyl phosphate; the sequence is GT. Histidine 89 serves as the catalytic Proton donor. Phenylalanine 114 contacts 5-amino-6-(D-ribitylamino)uracil. Arginine 128 lines the (2S)-2-hydroxy-3-oxobutyl phosphate pocket.

Belongs to the DMRL synthase family. Forms an icosahedral capsid composed of 60 subunits, arranged as a dodecamer of pentamers.

It carries out the reaction (2S)-2-hydroxy-3-oxobutyl phosphate + 5-amino-6-(D-ribitylamino)uracil = 6,7-dimethyl-8-(1-D-ribityl)lumazine + phosphate + 2 H2O + H(+). It participates in cofactor biosynthesis; riboflavin biosynthesis; riboflavin from 2-hydroxy-3-oxobutyl phosphate and 5-amino-6-(D-ribitylamino)uracil: step 1/2. In terms of biological role, catalyzes the formation of 6,7-dimethyl-8-ribityllumazine by condensation of 5-amino-6-(D-ribitylamino)uracil with 3,4-dihydroxy-2-butanone 4-phosphate. This is the penultimate step in the biosynthesis of riboflavin. The chain is 6,7-dimethyl-8-ribityllumazine synthase from Shewanella amazonensis (strain ATCC BAA-1098 / SB2B).